A 79-amino-acid polypeptide reads, in one-letter code: Sulfur carrier protein TusA (79 aa).

Cys16 (cysteine persulfide intermediate) is an active-site residue.

It belongs to the sulfur carrier protein TusA family.

It is found in the cytoplasm. Sulfur carrier protein which probably makes part of a sulfur-relay system. The sequence is that of Sulfur carrier protein TusA from Pseudomonas paraeruginosa (strain DSM 24068 / PA7) (Pseudomonas aeruginosa (strain PA7)).